Reading from the N-terminus, the 482-residue chain is Phenylalanine--tRNA ligase alpha subunit (482 aa).

Residues Thr327, 366-368, and Tyr406 contribute to the L-phenylalanine site; that span reads QIE. Mg(2+) is bound at residue Glu408. Phe430 contacts L-phenylalanine.

It belongs to the class-II aminoacyl-tRNA synthetase family. Phe-tRNA synthetase alpha subunit type 2 subfamily. Tetramer of two alpha and two beta subunits. It depends on Mg(2+) as a cofactor.

It localises to the cytoplasm. The enzyme catalyses tRNA(Phe) + L-phenylalanine + ATP = L-phenylalanyl-tRNA(Phe) + AMP + diphosphate + H(+). In Thermoplasma volcanium (strain ATCC 51530 / DSM 4299 / JCM 9571 / NBRC 15438 / GSS1), this protein is Phenylalanine--tRNA ligase alpha subunit.